The primary structure comprises 1172 residues: Short transient receptor potential channel 2 (1172 aa).

The span at 1–10 (MLMSRTDSKS) shows a compositional bias: basic and acidic residues. 4 disordered regions span residues 1–22 (MLMS…MFKD), 69–98 (VVDP…WLTN), 140–227 (SAAR…GGVQ), and 249–271 (ATCG…SESV). Over 1 to 659 (MLMSRTDSKS…PKSQLGRLLK (659 aa)) the chain is Cytoplasmic. The span at 75–87 (PGSSGLNQNSTDV) shows a compositional bias: polar residues. Residues 166–177 (ESAEPRAEEPNR) show a composition bias toward basic and acidic residues. A compositionally biased stretch (polar residues) spans 195 to 204 (SLSNSSSQPN). The span at 206 to 218 (RTGRTRQRQHRPQ) shows a compositional bias: basic residues. Over residues 261-270 (SPASLSSSES) the composition is skewed to low complexity. ANK repeat units follow at residues 301-330 (KFPP…DASG), 377-406 (QIHE…REKG), and 430-459 (PGVT…TIAR). A helical membrane pass occupies residues 660–680 (IPVLKFLLHSASYLWFLIFLL). Residues 681–702 (GESLVMETQLSTFKGRSQSVWE) are Extracellular-facing. The chain crosses the membrane as a helical span at residues 703 to 723 (TSLHMIWVTGFLWFECKEVWI). The Cytoplasmic segment spans residues 724 to 738 (EGLRSYLLDWWNFLD). A helical membrane pass occupies residues 739-759 (VVILSLYLASFALRLLLAGLA). Residues 760 to 789 (YMHCRDASDSTTCRYFTTAERSEWRTEDPQ) lie on the Extracellular side of the membrane. A helical membrane pass occupies residues 790-810 (FLAEVLFAVTSMLSFTRLAYI). Residues 811–833 (LPAHESLGTLQISIGKMIDDMIR) are Cytoplasmic-facing. The helical transmembrane segment at 834 to 854 (FMFILMIILTAFLCGLNNIYV) threads the bilayer. Residues 855 to 899 (PYQESEKLGNFNETFQFLFWTMFGMEEHTVVDMPQFLVPEFVGRA) lie on the Extracellular side of the membrane. Residues 900-920 (MYGIFTIVMVIVLLNMLIAMI) form a helical membrane-spanning segment. The Cytoplasmic segment spans residues 921 to 1172 (TNSFQKIEDD…EGDLETKGES (252 aa)). Residues 1118–1172 (VSLGDGLDGTGEAGAPAPGEPGSSSSAHVLVHREQEAEGSGDLLLEGDLETKGES) are disordered. Low complexity predominate over residues 1130-1144 (AGAPAPGEPGSSSSA).

Belongs to the transient receptor (TC 1.A.4) family. STrpC subfamily. TRPC2 sub-subfamily. In terms of tissue distribution, isoform 3 is ubiquitously expressed at low levels. Isoform 4 is expressed exclusively in vomeronasal organ.

The protein localises to the membrane. Its function is as follows. Thought to form a receptor-activated non-selective calcium permeant cation channel. Probably is operated by a phosphatidylinositol second messenger system activated by receptor tyrosine kinases or G-protein coupled receptors. May also be activated by intracellular calcium store depletion. Plays a role in mediating responsivity to pheromones that elicit aggressive and mating behaviors. Required for response to the Esp1 pheromone which enhances female sexual receptive behavior and to the Esp22 pheromone which inhibits adult male mating behavior. The protein is Short transient receptor potential channel 2 (Trpc2) of Mus musculus (Mouse).